We begin with the raw amino-acid sequence, 111 residues long: MVSSKLIAPLSDELAKEYGMKRIGIRKDDTVRVMRGDNYGFEGKVTQVFPESGRIAIEGLTRKKADGTPVYIKIHASKVEITKLNTNDPRRKDIINRKASRQKEEQGGKAQ.

Residues 85–111 are disordered; it reads NTNDPRRKDIINRKASRQKEEQGGKAQ. The segment covering 88–111 has biased composition (basic and acidic residues); sequence DPRRKDIINRKASRQKEEQGGKAQ.

Belongs to the universal ribosomal protein uL24 family. Part of the 50S ribosomal subunit.

One of two assembly initiator proteins, it binds directly to the 5'-end of the 23S rRNA, where it nucleates assembly of the 50S subunit. Functionally, located at the polypeptide exit tunnel on the outside of the subunit. The polypeptide is Large ribosomal subunit protein uL24 (Metallosphaera sedula (strain ATCC 51363 / DSM 5348 / JCM 9185 / NBRC 15509 / TH2)).